The primary structure comprises 273 residues: tRNA pseudouridine synthase B (273 aa).

The active-site Nucleophile is Asp-38.

Belongs to the pseudouridine synthase TruB family. Type 1 subfamily.

It carries out the reaction uridine(55) in tRNA = pseudouridine(55) in tRNA. Its function is as follows. Responsible for synthesis of pseudouridine from uracil-55 in the psi GC loop of transfer RNAs. The chain is tRNA pseudouridine synthase B from Campylobacter concisus (strain 13826).